We begin with the raw amino-acid sequence, 76 residues long: DNA-directed RNA polymerase subunit omega (76 aa).

Belongs to the RNA polymerase subunit omega family. In cyanobacteria the RNAP catalytic core is composed of 2 alpha, 1 beta, 1 beta', 1 gamma and 1 omega subunit. When a sigma factor is associated with the core the holoenzyme is formed, which can initiate transcription.

It catalyses the reaction RNA(n) + a ribonucleoside 5'-triphosphate = RNA(n+1) + diphosphate. In terms of biological role, promotes RNA polymerase assembly. Latches the N- and C-terminal regions of the beta' subunit thereby facilitating its interaction with the beta and alpha subunits. The chain is DNA-directed RNA polymerase subunit omega from Synechococcus elongatus (strain ATCC 33912 / PCC 7942 / FACHB-805) (Anacystis nidulans R2).